Reading from the N-terminus, the 89-residue chain is Small ribosomal subunit protein uS14 (89 aa).

This sequence belongs to the universal ribosomal protein uS14 family. As to quaternary structure, part of the 30S ribosomal subunit. Contacts proteins S3 and S10.

Functionally, binds 16S rRNA, required for the assembly of 30S particles and may also be responsible for determining the conformation of the 16S rRNA at the A site. The protein is Small ribosomal subunit protein uS14 of Cytophaga hutchinsonii (strain ATCC 33406 / DSM 1761 / CIP 103989 / NBRC 15051 / NCIMB 9469 / D465).